A 400-amino-acid polypeptide reads, in one-letter code: Succinate--glutarate CoA-transferase (400 aa).

D181 (nucleophile) is an active-site residue.

The protein belongs to the CoA-transferase III family.

It carries out the reaction glutarate + succinyl-CoA = glutaryl-CoA + succinate. It participates in amino-acid degradation. It functions in the pathway cofactor biosynthesis; biotin biosynthesis. Functionally, is involved in L-lysine degradation and provides glutaryl-CoA for biotin synthesis. Catalyzes the conversion of glutarate to glutaryl-CoA via the transfer of CoA from succinyl-CoA. The sequence is that of Succinate--glutarate CoA-transferase from Agrobacterium fabrum (strain C58 / ATCC 33970) (Agrobacterium tumefaciens (strain C58)).